Reading from the N-terminus, the 182-residue chain is Peptidyl-tRNA hydrolase (182 aa).

Residue tyrosine 14 participates in tRNA binding. Histidine 19 functions as the Proton acceptor in the catalytic mechanism. Positions 64, 66, and 112 each coordinate tRNA.

Belongs to the PTH family. As to quaternary structure, monomer.

The protein resides in the cytoplasm. The catalysed reaction is an N-acyl-L-alpha-aminoacyl-tRNA + H2O = an N-acyl-L-amino acid + a tRNA + H(+). In terms of biological role, hydrolyzes ribosome-free peptidyl-tRNAs (with 1 or more amino acids incorporated), which drop off the ribosome during protein synthesis, or as a result of ribosome stalling. Functionally, catalyzes the release of premature peptidyl moieties from peptidyl-tRNA molecules trapped in stalled 50S ribosomal subunits, and thus maintains levels of free tRNAs and 50S ribosomes. The chain is Peptidyl-tRNA hydrolase from Wolbachia sp. subsp. Brugia malayi (strain TRS).